A 388-amino-acid polypeptide reads, in one-letter code: Queuine tRNA-ribosyltransferase (388 aa).

Asp91 acts as the Proton acceptor in catalysis. Substrate-binding positions include 91–95 (DSGGY), Asp145, Gln190, and Gly217. The interval 248–254 (GVGAPED) is RNA binding. Residue Asp267 is the Nucleophile of the active site. An RNA binding; important for wobble base 34 recognition region spans residues 272 to 276 (TRLAR). The Zn(2+) site is built by Cys305, Cys307, Cys310, and His336.

The protein belongs to the queuine tRNA-ribosyltransferase family. As to quaternary structure, homodimer. Within each dimer, one monomer is responsible for RNA recognition and catalysis, while the other monomer binds to the replacement base PreQ1. Requires Zn(2+) as cofactor.

The catalysed reaction is 7-aminomethyl-7-carbaguanine + guanosine(34) in tRNA = 7-aminomethyl-7-carbaguanosine(34) in tRNA + guanine. It functions in the pathway tRNA modification; tRNA-queuosine biosynthesis. Its function is as follows. Catalyzes the base-exchange of a guanine (G) residue with the queuine precursor 7-aminomethyl-7-deazaguanine (PreQ1) at position 34 (anticodon wobble position) in tRNAs with GU(N) anticodons (tRNA-Asp, -Asn, -His and -Tyr). Catalysis occurs through a double-displacement mechanism. The nucleophile active site attacks the C1' of nucleotide 34 to detach the guanine base from the RNA, forming a covalent enzyme-RNA intermediate. The proton acceptor active site deprotonates the incoming PreQ1, allowing a nucleophilic attack on the C1' of the ribose to form the product. After dissociation, two additional enzymatic reactions on the tRNA convert PreQ1 to queuine (Q), resulting in the hypermodified nucleoside queuosine (7-(((4,5-cis-dihydroxy-2-cyclopenten-1-yl)amino)methyl)-7-deazaguanosine). The polypeptide is Queuine tRNA-ribosyltransferase (Dictyoglomus turgidum (strain DSM 6724 / Z-1310)).